A 114-amino-acid polypeptide reads, in one-letter code: MATATTIRRKLRTRRKVRTTTAASGRLRLSVYRSSKHIYAQIIDDSRGQTLAAASSAALKSGNKTDTAAAVGKALAAAAAEKGIKQVVFDRGSYKYHGRVKALADAAREGGLDF.

It belongs to the universal ribosomal protein uL18 family. Part of the 50S ribosomal subunit; part of the 5S rRNA/L5/L18/L25 subcomplex. Contacts the 23S rRNA. Contacts protein L27 and the 5S rRNA.

Functionally, this is one of the proteins that bind and probably mediate the attachment of the 5S RNA into the large ribosomal subunit, where it forms part of the central protuberance. The polypeptide is Large ribosomal subunit protein uL18 (rplR) (Deinococcus radiodurans (strain ATCC 13939 / DSM 20539 / JCM 16871 / CCUG 27074 / LMG 4051 / NBRC 15346 / NCIMB 9279 / VKM B-1422 / R1)).